The chain runs to 147 residues: Large ribosomal subunit protein uL13 (147 aa).

The disordered stretch occupies residues 126–147 (AGPTHPHQAQQPVPYEIKQVAQ).

Belongs to the universal ribosomal protein uL13 family. Part of the 50S ribosomal subunit.

In terms of biological role, this protein is one of the early assembly proteins of the 50S ribosomal subunit, although it is not seen to bind rRNA by itself. It is important during the early stages of 50S assembly. This Parafrankia sp. (strain EAN1pec) protein is Large ribosomal subunit protein uL13.